The primary structure comprises 604 residues: ERAD-associated E3 ubiquitin-protein ligase component HRD3B (604 aa).

The signal sequence occupies residues 1 to 25 (MRVSGQSIIAISLFTLSLYIHRVQA). The interval 48–69 (ESSDFDEFGESEPKSEEELDPG) is disordered. 2 N-linked (GlcNAc...) asparagine glycosylation sites follow: Asn78 and Asn105. Sel1-like repeat units lie at residues 125–160 (PHAQ…AGGN), 244–274 (VAMH…FSKA), 279–307 (LGYL…AANN), 311–344 (SGHY…ANAG), 346–380 (PKAF…AERG), 464–492 (AALL…YMYA), and 498–528 (AQAM…YDQA). A glycan (N-linked (GlcNAc...) asparagine) is linked at Asn293.

It belongs to the sel-1 family.

Its function is as follows. May be involved in the endoplasmic reticulum (ER) quality control system called ER-associated degradation (ERAD). The polypeptide is ERAD-associated E3 ubiquitin-protein ligase component HRD3B (Arabidopsis thaliana (Mouse-ear cress)).